A 650-amino-acid polypeptide reads, in one-letter code: Chaperone protein DnaK (650 aa).

Residue threonine 200 is modified to Phosphothreonine; by autocatalysis. A compositionally biased stretch (low complexity) spans 611-636; it reads AQQAGAAGAAGAAEGAAHAGGAQQAA. The segment at 611–637 is disordered; sequence AQQAGAAGAAGAAEGAAHAGGAQQAAD.

The protein belongs to the heat shock protein 70 family.

Acts as a chaperone. The protein is Chaperone protein DnaK of Burkholderia ambifaria (strain MC40-6).